We begin with the raw amino-acid sequence, 277 residues long: Large ribosomal subunit protein mL46 (277 aa).

The residue at position 228 (Lys228) is an N6-acetyllysine.

It belongs to the mitochondrion-specific ribosomal protein mL46 family. Component of the mitochondrial ribosome large subunit (39S) which comprises a 16S rRNA and about 50 distinct proteins.

The protein localises to the mitochondrion. This Bos taurus (Bovine) protein is Large ribosomal subunit protein mL46 (MRPL46).